The following is a 507-amino-acid chain: Phosphoprotein (507 aa).

The interval 1–48 is interaction with N0; the sequence is MAEEQARHVKNGLECIRALKAEPIGSLAIGEAMAAWSEISDNPGQERA. 5 disordered regions span residues 42 to 91, 133 to 163, 201 to 227, 252 to 273, and 285 to 307; these read NPGQ…DDTE, SGLD…TEGY, NNFP…SETP, TQCA…GNVP, and WTPE…GDHY. Phosphoserine occurs at positions 86 and 151. Acidic residues predominate over residues 144–160; that stretch reads GDNESENSDVDIGEPDT. The segment covering 260–270 has biased composition (low complexity); sequence SEPSGPGAPAG. The segment covering 286 to 301 has biased composition (polar residues); it reads TPESGTTISPRSQNNK. Residues 304-376 form a multimerization region; sequence GDHYDDELFS…LSSIMIAIPG (73 aa). Interaction with the L polymerase stretches follow at residues 361-377 and 396-410; these read STLE…IPGL and PIIG…AEVL. Positions 457–507 are x domain (XD); the sequence is GPVSRSVIRSIIKSSRIEEDRKRYLMTLLDDIKGANDLSKFHQMLMKIIMK. Positions 459 to 507 are interaction with the nucleocapsid (N-RNA); that stretch reads VSRSVIRSIIKSSRIEEDRKRYLMTLLDDIKGANDLSKFHQMLMKIIMK.

Belongs to the morbillivirus P protein family. Homotetramer. Interacts (via multimerization domain and XD domain) with polymerase L; this interaction forms the polymerase L-P complex. Interacts (via N-terminus) with N0 (via Ncore); this interaction allows P to chaperon N0 to avoid N polymerization and non-specific RNA binding before encapsidation. Interacts (via C-terminus) with N-RNA template (via Ntail); this interaction maintains the P/L complex anchored to the nucleocapsid template during the sequential transcription. Interacts (via C-terminus) with protein C this interaction allows C to associate with the ribonucleocapsid. Post-translationally, phosphorylation on serines by host CK2 is necessary for the formation of viral factories.

Functionally, essential cofactor of the RNA polymerase L that plays a central role in the transcription and replication by forming the polymerase complex with RNA polymerase L and recruiting L to the genomic N-RNA template for RNA synthesis. Also plays a central role in the encapsidation of nascent RNA chains by forming the encapsidation complex with the nucleocapsid protein N (N-P complex). Acts as a chaperone for newly synthesized free N protein, so-called N0, allowing encapsidation of nascent RNA chains during replication. The nucleoprotein protein N prevents excessive phosphorylation of P, which leads to down-regulation of viral transcription/ replication. Participates, together with N, in the formation of viral factories (viroplasms), which are large inclusions in the host cytoplasm where replication takes place. The polypeptide is Phosphoprotein (P/V) (Homo sapiens (Human)).